Consider the following 280-residue polypeptide: Urease accessory protein UreD (280 aa).

This sequence belongs to the UreD family. As to quaternary structure, ureD, UreF and UreG form a complex that acts as a GTP-hydrolysis-dependent molecular chaperone, activating the urease apoprotein by helping to assemble the nickel containing metallocenter of UreC. The UreE protein probably delivers the nickel.

The protein localises to the cytoplasm. In terms of biological role, required for maturation of urease via the functional incorporation of the urease nickel metallocenter. This Pseudomonas aeruginosa (strain UCBPP-PA14) protein is Urease accessory protein UreD.